The sequence spans 109 residues: MAASAARGAAALRRSINQPVAFVRRIPWTAASSQLKEHFAQFGHVRRCILPFDKETGFHRGLGWVQFSSEEGLRNALQQENHIIDGVKVQVHTRRPKLPQTSDDEKKDF.

A Phosphoserine modification is found at Ser15. The RRM domain maps to Pro19–Asp103. Residue Thr101 is modified to Phosphothreonine. Ser102 carries the post-translational modification Phosphoserine.

As to expression, ubiquitously expressed, with highest level in heart, liver, skeletal muscle and testis.

The protein localises to the mitochondrion. It is found in the nucleus. Functionally, RNA-binding protein that acts as a nuclear receptor corepressor. Probably acts by binding the SRA RNA, and repressing the SRA-mediated nuclear receptor coactivation. Binds the STR7 loop of SRA RNA. Also able to repress glucocorticoid (GR), androgen (AR), thyroid (TR) and VDR-mediated transactivation. This is SRA stem-loop-interacting RNA-binding protein, mitochondrial (SLIRP) from Homo sapiens (Human).